The sequence spans 313 residues: Aspartate carbamoyltransferase catalytic subunit (313 aa).

2 residues coordinate carbamoyl phosphate: Arg66 and Thr67. Position 94 (Lys94) interacts with L-aspartate. Residues Arg116, His144, and Gln147 each contribute to the carbamoyl phosphate site. 2 residues coordinate L-aspartate: Arg177 and Arg231. The carbamoyl phosphate site is built by Gly272 and Pro273.

This sequence belongs to the aspartate/ornithine carbamoyltransferase superfamily. ATCase family. As to quaternary structure, heterododecamer (2C3:3R2) of six catalytic PyrB chains organized as two trimers (C3), and six regulatory PyrI chains organized as three dimers (R2).

It catalyses the reaction carbamoyl phosphate + L-aspartate = N-carbamoyl-L-aspartate + phosphate + H(+). It participates in pyrimidine metabolism; UMP biosynthesis via de novo pathway; (S)-dihydroorotate from bicarbonate: step 2/3. Its function is as follows. Catalyzes the condensation of carbamoyl phosphate and aspartate to form carbamoyl aspartate and inorganic phosphate, the committed step in the de novo pyrimidine nucleotide biosynthesis pathway. In Pelagibacter ubique (strain HTCC1062), this protein is Aspartate carbamoyltransferase catalytic subunit.